The following is a 298-amino-acid chain: Homoserine kinase (298 aa).

85–95 (PMGGLGSSAAS) serves as a coordination point for ATP.

This sequence belongs to the GHMP kinase family. Homoserine kinase subfamily.

Its subcellular location is the cytoplasm. It catalyses the reaction L-homoserine + ATP = O-phospho-L-homoserine + ADP + H(+). Its pathway is amino-acid biosynthesis; L-threonine biosynthesis; L-threonine from L-aspartate: step 4/5. In terms of biological role, catalyzes the ATP-dependent phosphorylation of L-homoserine to L-homoserine phosphate. This Methanopyrus kandleri (strain AV19 / DSM 6324 / JCM 9639 / NBRC 100938) protein is Homoserine kinase.